Here is a 63-residue protein sequence, read N- to C-terminus: Kappa-theraphotoxin-Cg3a 1 (63 aa).

A signal peptide spans methionine 1–glutamate 21. Positions valine 22–glycine 29 are excised as a propeptide. 3 disulfides stabilise this stretch: cysteine 31/cysteine 46, cysteine 38/cysteine 51, and cysteine 45/cysteine 58.

It belongs to the neurotoxin 10 (Hwtx-1) family. 44 (Jztx-4) subfamily. In terms of tissue distribution, expressed by the venom gland.

The protein localises to the secreted. Its function is as follows. Gating modifier of Kv2.1/KCNB1, Kv2.2/KCNB2 and Kv4.3/KCND3 channels. This chain is Kappa-theraphotoxin-Cg3a 1, found in Chilobrachys guangxiensis (Chinese earth tiger tarantula).